The following is a 398-amino-acid chain: Autophagy-related protein 39 (398 aa).

The ATG8-binding motif lies at 8-11 (WNLV). Positions 15–50 (RLRKGREGEEQSSKSEISLDSLHESSFAGEDDEDFD) are disordered. An ATG11-binding motif is present at residues 52–59 (DVLSNTSS). Residues 148 to 164 (VIMLSSLLSMTFSYLAL) form a helical membrane-spanning segment.

As to quaternary structure, interacts with ATG8 and ATG11.

It is found in the endoplasmic reticulum membrane. Its subcellular location is the preautophagosomal structure membrane. Functionally, acts as a receptor for reticulophagy and nucleophagy. Directs autophagic sequestration of double-membrane vesicles derived from the nuclear envelope and perinuclear endoplasmic reticulum (pnER) into autophagosomes. Is not required for the cytoplasm-to-vacuole targeting pathway, mitophagy, pexophagy, and non-selective autophagy. The polypeptide is Autophagy-related protein 39 (Saccharomyces cerevisiae (strain ATCC 204508 / S288c) (Baker's yeast)).